A 430-amino-acid chain; its full sequence is Sphingosine-1-phosphate phosphatase 1 (430 aa).

The tract at residues 34–103 is disordered; sequence SSPAADEDAE…AGSQRRNSLT (70 aa). Position 101 is a phosphoserine (Ser101). Thr103 bears the Phosphothreonine mark. The next 4 membrane-spanning stretches (helical) occupy residues 121-141, 152-172, 193-213, and 216-236; these read FCLGTELGNELFYILFFPFWI, LVIIWVLVMYLGQCTKDIIRW, MPSTHAMSGTAIPIAMFLLTY, and WQYPLIYGLILIPCWSSLVCL. The tract at residues 167–175 is phosphatase sequence motif I; the sequence is KDIIRWPRP. The interval 194–197 is phosphatase sequence motif II; sequence PSTH. His197 serves as the catalytic Proton donor. The interval 237 to 248 is phosphatase sequence motif III; that stretch reads SRIYMGMHSILD. His244 (nucleophile) is an active-site residue. The next 5 membrane-spanning stretches (helical) occupy residues 246 to 266, 279 to 299, 311 to 331, 348 to 368, and 409 to 429; these read ILDVIAGFLYTILILIIFYPL, YAPLIIIGLHLILGIFSFTLD, ILGSGAGIACGSHAAYTLGLS, VTLFGKAILRIVLGMLLVLFV, and YGMVGFSITFLVPYVFSFIGI.

The protein belongs to the type 2 lipid phosphate phosphatase family. As to expression, highly expressed in liver and kidney. Expressed in epidermis, in the stratum granulosum and the stratum spinosum.

The protein resides in the endoplasmic reticulum membrane. It localises to the cell membrane. The enzyme catalyses sphinganine 1-phosphate + H2O = sphinganine + phosphate. It catalyses the reaction sphing-4-enine 1-phosphate + H2O = sphing-4-enine + phosphate. Inhibited by NaF, sodium orthovanadate, propanolol, and N-ethylmaleimide. Functionally, specifically dephosphorylates sphingosine 1-phosphate (S1P), dihydro-S1P, and phyto-S1P. Does not act on ceramide 1-phosphate, lysophosphatidic acid or phosphatidic acid. Sphingosine-1-phosphate phosphatase activity is needed for efficient recycling of sphingosine into the sphingolipid synthesis pathway. Regulates the intracellular levels of the bioactive sphingolipid metabolite S1P that regulates diverse biological processes acting both as an extracellular receptor ligand or as an intracellular second messenger. Involved in efficient ceramide synthesis from exogenous sphingoid bases. Converts S1P to sphingosine, which is readily metabolized to ceramide via ceramide synthase. In concert with sphingosine kinase 2 (SphK2), recycles sphingosine into ceramide through a phosphorylation/dephosphorylation cycle. Regulates endoplasmic-to-Golgi trafficking of ceramides, resulting in the regulation of ceramide levels in the endoplasmic reticulum, preferentially long-chain ceramide species, and influences the anterograde membrane transport of both ceramide and proteins from the endoplasmic reticulum to the Golgi apparatus. The modulation of intracellular ceramide levels in turn regulates apoptosis. Via S1P levels, modulates resting tone, intracellular Ca(2+) and myogenic vasoconstriction in resistance arteries. Also involved in unfolded protein response (UPR) and ER stress-induced autophagy via regulation of intracellular S1P levels. Involved in the regulation of epidermal homeostasis and keratinocyte differentiation. This chain is Sphingosine-1-phosphate phosphatase 1, found in Mus musculus (Mouse).